The primary structure comprises 173 residues: Ribosome maturation factor RimM (173 aa).

One can recognise a PRC barrel domain in the interval 98–170 (EDEYYWCDLL…RMTVSLPEGL (73 aa)).

The protein belongs to the RimM family. As to quaternary structure, binds ribosomal protein uS19.

It localises to the cytoplasm. An accessory protein needed during the final step in the assembly of 30S ribosomal subunit, possibly for assembly of the head region. Essential for efficient processing of 16S rRNA. May be needed both before and after RbfA during the maturation of 16S rRNA. It has affinity for free ribosomal 30S subunits but not for 70S ribosomes. In Geotalea uraniireducens (strain Rf4) (Geobacter uraniireducens), this protein is Ribosome maturation factor RimM.